The following is a 524-amino-acid chain: Cytochrome P450 4F3 (524 aa).

Residues 19 to 39 form a helical membrane-spanning segment; the sequence is WLLLLLAGASCLLAYILTPIY. Residue cysteine 468 participates in heme binding.

The protein belongs to the cytochrome P450 family. Heme serves as cofactor. As to expression, highest level in polymorphonuclear leukocytes and dendritic cells. Detectable in lymph nodes, spleen, bone marrow and peripheral blood. Highly expressed in ovary. Very low level in liver, kidney, and smooth muscle. Expressed in neutrophils (at protein level).

The protein localises to the endoplasmic reticulum membrane. It localises to the microsome membrane. It carries out the reaction leukotriene B4 + reduced [NADPH--hemoprotein reductase] + O2 = 18-hydroxy-leukotriene B4 + oxidized [NADPH--hemoprotein reductase] + H2O + H(+). The catalysed reaction is leukotriene B4 + reduced [NADPH--hemoprotein reductase] + O2 = 19-hydroxy-leukotriene B4 + oxidized [NADPH--hemoprotein reductase] + H2O + H(+). It functions in the pathway lipid metabolism; leukotriene B4 degradation. Functionally, a cytochrome P450 monooxygenase involved in the metabolism of the pro-inflammatory lipid mediator leukotriene B4 (LTB4). Hydroxylates at the omega-1 and omega-2 positions LTB4. This oxidation step leads to LTB4 inactivation, which is postulated to be a crucial part of the resolution of inflammation. Mechanistically, uses molecular oxygen inserting one oxygen atom into a substrate, and reducing the second into a water molecule, with two electrons provided by NADPH via cytochrome P450 reductase (CPR; NADPH-ferrihemoprotein reductase). In Mus musculus (Mouse), this protein is Cytochrome P450 4F3.